A 259-amino-acid chain; its full sequence is tRNA-cytidine(32) 2-sulfurtransferase (259 aa).

The PP-loop motif signature appears at 37 to 42; it reads SGGKDS. Residues C112, C115, and C202 each contribute to the [4Fe-4S] cluster site.

Belongs to the TtcA family. As to quaternary structure, homodimer. Mg(2+) is required as a cofactor. The cofactor is [4Fe-4S] cluster.

The protein localises to the cytoplasm. The enzyme catalyses cytidine(32) in tRNA + S-sulfanyl-L-cysteinyl-[cysteine desulfurase] + AH2 + ATP = 2-thiocytidine(32) in tRNA + L-cysteinyl-[cysteine desulfurase] + A + AMP + diphosphate + H(+). The protein operates within tRNA modification. Catalyzes the ATP-dependent 2-thiolation of cytidine in position 32 of tRNA, to form 2-thiocytidine (s(2)C32). The sulfur atoms are provided by the cysteine/cysteine desulfurase (IscS) system. This Syntrophotalea carbinolica (strain DSM 2380 / NBRC 103641 / GraBd1) (Pelobacter carbinolicus) protein is tRNA-cytidine(32) 2-sulfurtransferase.